The primary structure comprises 1240 residues: DNA-directed RNA polymerase subunit beta (1240 aa).

Belongs to the RNA polymerase beta chain family. The RNAP catalytic core consists of 2 alpha, 1 beta, 1 beta' and 1 omega subunit. When a sigma factor is associated with the core the holoenzyme is formed, which can initiate transcription.

It catalyses the reaction RNA(n) + a ribonucleoside 5'-triphosphate = RNA(n+1) + diphosphate. DNA-dependent RNA polymerase catalyzes the transcription of DNA into RNA using the four ribonucleoside triphosphates as substrates. The polypeptide is DNA-directed RNA polymerase subunit beta (Rhodopirellula baltica (strain DSM 10527 / NCIMB 13988 / SH1)).